The chain runs to 543 residues: Tapetal oleosin GRP-17 (543 aa).

Positions 1 to 67 (MSEELSQKPS…FLMPLLEVIK (67 aa)) are polar. Helical transmembrane passes span 68–88 (IIIASVASVIFVGFACVTLAG), 98–118 (PVFIIFSPVLVPATIATVVLA), and 119–139 (TGFTAGGSFGATALGLIMWLV). Residues 68–162 (IIIASVASVI…PAGLPPNSGA (95 aa)) are hydrophobic. Disordered stretches follow at residues 148–169 (KDNPPPAGLPPNSGAGAGGAQS) and 195–543 (GGKK…HMAE). Residues 201–212 (SGGGKSKFGGKG) show a composition bias toward gly residues. A run of 3 repeats spans residues 220 to 223 (GMSS), 227 to 230 (GMSG), and 234 to 237 (GMSG). Positions 220–229 (GMSSGDEGMS) are enriched in low complexity. Residues 220-514 (GMSSGDEGMS…GGMSESGMSG (295 aa)) form a 29 X 4 AA approximate tandem repeats of G-M-S-G region. Over residues 230–240 (GSEGGMSGGEG) the composition is skewed to gly residues. Residues 244-256 (KSGKGKLKAKLEK) are compositionally biased toward basic residues. 26 tandem repeats follow at residues 259–262 (GMSG), 269–272 (GMSG), 276–279 (GMSG), 301–304 (GMSG), 305–308 (GMSG), 312–315 (GMSG), 319–322 (GMSS), 344–347 (SMSG), 348–351 (GMSG), 355–358 (GMSG), 362–365 (GMSG), 387–390 (CMSG), 391–394 (GMSG), 398–401 (GMSR), 405–408 (GISG), 410–413 (GMSG), 414–417 (GSGS), 438–441 (GMSG), 445–448 (GMSG), 458–461 (GSMS), 464–467 (GMSG), 468–471 (GSGS), 492–495 (GMSG), 499–502 (GMSG), 506–509 (GMSE), and 511–514 (GMSG). Residues 272–283 (GSEGGMSGGGGS) show a composition bias toward gly residues. Basic residues predominate over residues 285-301 (SKSKKSKLKAKLGKKKG). A compositionally biased stretch (gly residues) spans 315–326 (GSEGGMSSGGGS). Basic residues predominate over residues 328-344 (SKSKKSKLKAKLGKKKS). The span at 345 to 357 (MSGGMSGSEEGMS) shows a compositional bias: low complexity. Over residues 358–370 (GSEGGMSGGGGGK) the composition is skewed to gly residues. Over residues 371 to 387 (SKSRKSKLKANLGKKKC) the composition is skewed to basic residues. 2 stretches are compositionally biased toward gly residues: residues 405 to 416 (GISGGGMSGGSG) and 440 to 470 (SGSGGGMSGSEGGVSGSEGSMSGGGMSGGSG). A compositionally biased stretch (basic residues) spans 471–492 (SKHKIGGGKHGGLRGKFGKKRG). The span at 495-505 (GSEGGMSGSEG) shows a compositional bias: gly residues. The segment covering 518–531 (GKHKIGGGKHKFGG) has biased composition (basic residues). A compositionally biased stretch (gly residues) spans 532 to 543 (GKHGGGGGHMAE).

It belongs to the oleosin family. In terms of processing, proteolytically cleaved following anther tapetal breakdown. In terms of tissue distribution, flower specific, especially in anther tapetum, pollen (at protein level) and flowers florets.

The protein resides in the secreted. It is found in the extracellular space. It localises to the extracellular matrix. Its subcellular location is the pollen coat. The protein localises to the lipid droplet. The protein resides in the membrane. Functionally, lipid-binding oleosin pollen coat protein required to mediate pollen recognition by stigma cells and subsequent pollen hydration. Involved in anther tapetum development, especially for the physiology of tapetosomes. Also implicated in the formation of pollen coat. This Arabidopsis thaliana (Mouse-ear cress) protein is Tapetal oleosin GRP-17.